We begin with the raw amino-acid sequence, 621 residues long: Polycystin-2-like protein 2 (621 aa).

At 1–31 (MSEATWWYRGGTSKHDLHYRREAEVNTTLEE) the chain is on the cytoplasmic side. Residues 32–52 (LLLYFIFLINLCILTFGMVNP) form a helical membrane-spanning segment. At 53 to 277 (HMYYLNKVMS…SVKLLRYVSY (225 aa)) the chain is on the extracellular side. Asn-115 and Asn-138 each carry an N-linked (GlcNAc...) asparagine glycan. Residues 278–298 (YDYFIASCEVIFCIFLFVFII) traverse the membrane as a helical segment. The Cytoplasmic portion of the chain corresponds to 299–314 (QELRKVNEFKSAYFRS). Residues 315 to 335 (VWNWLEMLLLLLCFLAVSFYA) traverse the membrane as a helical segment. Residues 336–360 (YCNMQSFLLLGQLLKNTDSYPDFYF) lie on the Extracellular side of the membrane. A helical transmembrane segment spans residues 361–381 (LAYWHIYYNNVIAITIFFAWI). Topologically, residues 382 to 406 (KIFKFISFNETMSQLSSTLSRCMKD) are cytoplasmic. Residues 407–427 (IVGFAIMFFIIFSAYAQLGFL) traverse the membrane as a helical segment. At 428–468 (VFGSQVDDFSTFQNSIFAQFRIVLGDFNFAGIQQANWILGP) the chain is on the extracellular side. A helical membrane pass occupies residues 469–489 (IYFITFIFFVFFVLLNMFLAI). Topologically, residues 490 to 621 (INDTYSEVKA…KLNQLMRKLH (132 aa)) are cytoplasmic. Residues 521-551 (NVLEKLRLKKAQAKEEKKMQTTDLAQRARRD) adopt a coiled-coil conformation.

It belongs to the polycystin family. Interacts with TRPC1 and TRPC5. As to expression, expressed only in testis and heart.

The protein resides in the membrane. Exhibits a lower single conductance but no spontaneous channel activity. May function as a regulator of calcium channels or a channel component involving Ca2(+) homeostasis. In Mus musculus (Mouse), this protein is Polycystin-2-like protein 2.